A 557-amino-acid polypeptide reads, in one-letter code: Formate--tetrahydrofolate ligase (557 aa).

67–74 (TPAGEGKS) is an ATP binding site.

The protein belongs to the formate--tetrahydrofolate ligase family.

It catalyses the reaction (6S)-5,6,7,8-tetrahydrofolate + formate + ATP = (6R)-10-formyltetrahydrofolate + ADP + phosphate. Its pathway is one-carbon metabolism; tetrahydrofolate interconversion. The chain is Formate--tetrahydrofolate ligase from Latilactobacillus sakei subsp. sakei (strain 23K) (Lactobacillus sakei subsp. sakei).